We begin with the raw amino-acid sequence, 491 residues long: Cytochrome P450 2C40 (491 aa).

The first 25 residues, 1-25, serve as a signal peptide directing secretion; the sequence is MDPFVVLVLCLSFLLVLSLWRQRSA. Cysteine 435 lines the heme pocket.

The protein belongs to the cytochrome P450 family. The cofactor is heme. Liver, brain, kidney, and intestine, with trace amounts in lung and heart. Expressed throughout the intestinal tract, with higher expression levels in jejunum, cecum and colon.

It localises to the endoplasmic reticulum membrane. The protein localises to the microsome membrane. The enzyme catalyses (5Z,8Z,11Z,14Z)-eicosatetraenoate + reduced [NADPH--hemoprotein reductase] + O2 = 16(R)-hydroxy-(5Z,8Z,11Z,14Z)-eicosatetraenoate + oxidized [NADPH--hemoprotein reductase] + H2O + H(+). The catalysed reaction is (5Z,8Z,11Z,14Z)-eicosatetraenoate + reduced [NADPH--hemoprotein reductase] + O2 = 16(S)-hydroxy-(5Z,8Z,11Z,14Z)-eicosatetraenoate + oxidized [NADPH--hemoprotein reductase] + H2O + H(+). It catalyses the reaction (5Z,8Z,11Z,14Z)-eicosatetraenoate + reduced [NADPH--hemoprotein reductase] + O2 = (14R,15S)-epoxy-(5Z,8Z,11Z)-eicosatrienoate + oxidized [NADPH--hemoprotein reductase] + H2O + H(+). It carries out the reaction (5Z,8Z,11Z,14Z)-eicosatetraenoate + reduced [NADPH--hemoprotein reductase] + O2 = (14S,15R)-epoxy-(5Z,8Z,11Z)-eicosatrienoate + oxidized [NADPH--hemoprotein reductase] + H2O + H(+). Its pathway is lipid metabolism; arachidonate metabolism. Functionally, a cytochrome P450 monooxygenase that may play a major role in the metabolism of arachidonic acid in the intestinal tract. Exhibits regioselective hydroxylase and epoxidase activity toward arachidonic acid, producing 16(R)-hydroxyeicosatetraenoic acid (HETE) and (14R,15S)-epoxyeicosatrienoic acid (EpETrE) as major products. Mechanistically, uses molecular oxygen inserting one oxygen atom into a substrate, and reducing the second into a water molecule, with two electrons provided by NADPH via cytochrome P450 reductase (CPR; NADPH-ferrihemoprotein reductase). In Mus musculus (Mouse), this protein is Cytochrome P450 2C40.